The following is a 192-amino-acid chain: Ribose 1,5-bisphosphate phosphokinase PhnN (192 aa).

15 to 22 (GPSGAGKD) is a binding site for ATP.

The protein belongs to the ribose 1,5-bisphosphokinase family.

It catalyses the reaction alpha-D-ribose 1,5-bisphosphate + ATP = 5-phospho-alpha-D-ribose 1-diphosphate + ADP. The protein operates within metabolic intermediate biosynthesis; 5-phospho-alpha-D-ribose 1-diphosphate biosynthesis; 5-phospho-alpha-D-ribose 1-diphosphate from D-ribose 5-phosphate (route II): step 3/3. Catalyzes the phosphorylation of ribose 1,5-bisphosphate to 5-phospho-D-ribosyl alpha-1-diphosphate (PRPP). The protein is Ribose 1,5-bisphosphate phosphokinase PhnN of Brucella abortus biovar 1 (strain 9-941).